Consider the following 62-residue polypeptide: MSIVFQIALAALVFFSFVMVIGVPFAYAAPQYWDQSKPLLWVGSGIWTILVIVVAVLNFFVI.

2 helical membrane passes run 8–28 and 41–61; these read ALAALVFFSFVMVIGVPFAYA and WVGSGIWTILVIVVAVLNFFV.

The protein belongs to the PsbZ family. In terms of assembly, PSII is composed of 1 copy each of membrane proteins PsbA, PsbB, PsbC, PsbD, PsbE, PsbF, PsbH, PsbI, PsbJ, PsbK, PsbL, PsbM, PsbT, PsbX, PsbY, PsbZ, Psb30/Ycf12, peripheral proteins PsbO, CyanoQ (PsbQ), PsbU, PsbV and a large number of cofactors. It forms dimeric complexes.

The protein localises to the cellular thylakoid membrane. In terms of biological role, may control the interaction of photosystem II (PSII) cores with the light-harvesting antenna, regulates electron flow through the 2 photosystem reaction centers. PSII is a light-driven water plastoquinone oxidoreductase, using light energy to abstract electrons from H(2)O, generating a proton gradient subsequently used for ATP formation. The protein is Photosystem II reaction center protein Z of Gloeothece citriformis (strain PCC 7424) (Cyanothece sp. (strain PCC 7424)).